The sequence spans 466 residues: Alpha-1A adrenergic receptor (466 aa).

Topologically, residues 1–27 (MVLLSENASEGSNCTHPPAQVNISKAI) are extracellular. Residues Asn-7, Asn-13, and Asn-22 are each glycosylated (N-linked (GlcNAc...) asparagine). A helical transmembrane segment spans residues 28–51 (LLGVILGGLIIFGVLGNILVILSV). Residues 52 to 64 (ACHRHLHSVTHYY) lie on the Cytoplasmic side of the membrane. A helical membrane pass occupies residues 65-88 (IVNLAVADLLLTSTVLPFSAIFEI). At 89 to 99 (LGYWAFGRVFC) the chain is on the extracellular side. The cysteines at positions 99 and 176 are disulfide-linked. Residues 100–122 (NIWAAVDVLCCTASIMGLCIISI) form a helical membrane-spanning segment. Topologically, residues 123–143 (DRYIGVSYPLRYPTIVTQRRG) are cytoplasmic. The chain crosses the membrane as a helical span at residues 144–167 (VRALLCVWALSLVISIGPLFGWRQ). Over 168–181 (QAPEDETICQINEE) the chain is Extracellular. Residues 182 to 205 (PGYVLFSALGSFYVPLTIILVMYC) traverse the membrane as a helical segment. Topologically, residues 206–273 (RVYVVAKRES…FSREKKAAKT (68 aa)) are cytoplasmic. At Ser-215 the chain carries Phosphoserine; by PKA. Residues 274–297 (LGIVVGCFVLCWLPFFLVMPIGSF) traverse the membrane as a helical segment. The Extracellular segment spans residues 298 to 305 (FPNFKPPE). Residues 306–329 (TVFKIVFWLGYLNSCINPIIYPCS) form a helical membrane-spanning segment. The Cytoplasmic segment spans residues 330-466 (SQEFKKAFQN…ISLGENGEEV (137 aa)). Residues 334-349 (KKAFQNVLRIQCLRRR) carry the Nuclear localization signal motif. A lipid anchor (S-palmitoyl cysteine) is attached at Cys-345.

It belongs to the G-protein coupled receptor 1 family. Adrenergic receptor subfamily. ADRA1A sub-subfamily. As to quaternary structure, homo- and heterooligomer. Heterooligomerizes with ADRA1B homooligomers in cardiac myocytes. Interacts with CAVIN4.

Its subcellular location is the nucleus membrane. The protein resides in the cell membrane. The protein localises to the cytoplasm. It is found in the membrane. It localises to the caveola. Its function is as follows. This alpha-adrenergic receptor mediates its action by association with G proteins that activate a phosphatidylinositol-calcium second messenger system. Its effect is mediated by G(q) and G(11) proteins. Nuclear ADRA1A-ADRA1B heterooligomers regulate phenylephrine (PE)-stimulated ERK signaling in cardiac myocytes. The chain is Alpha-1A adrenergic receptor (Adra1a) from Mus musculus (Mouse).